The chain runs to 253 residues: 5'-nucleotidase SurE (253 aa).

Residues D8, D9, S40, and N93 each coordinate a divalent metal cation.

The protein belongs to the SurE nucleotidase family. A divalent metal cation serves as cofactor.

The protein localises to the cytoplasm. It carries out the reaction a ribonucleoside 5'-phosphate + H2O = a ribonucleoside + phosphate. In terms of biological role, nucleotidase that shows phosphatase activity on nucleoside 5'-monophosphates. This Methylobacterium nodulans (strain LMG 21967 / CNCM I-2342 / ORS 2060) protein is 5'-nucleotidase SurE.